Consider the following 664-residue polypeptide: Type IV inositol polyphosphate 5-phosphatase 3 (664 aa).

The segment at G35–K76 is disordered. The span at Y40–G66 shows a compositional bias: acidic residues. 2 catalytic regions span residues E514–S529 and P592–K607.

It belongs to the inositol polyphosphate 5-phosphatase family.

It catalyses the reaction a 1,2-diacyl-sn-glycero-3-phospho-(1D-myo-inositol-4,5-bisphosphate) + H2O = a 1,2-diacyl-sn-glycero-3-phospho-(1D-myo-inositol 4-phosphate) + phosphate. The enzyme catalyses a 1,2-diacyl-sn-glycero-3-phospho-(1D-myo-inositol-3,4,5-trisphosphate) + H2O = a 1,2-diacyl-sn-glycero-3-phospho-(1D-myo-inositol-3,4-bisphosphate) + phosphate. Its function is as follows. Has phosphatase activity toward PtdIns(4,5)P2 and PtdIns(3,4,5)P3. The chain is Type IV inositol polyphosphate 5-phosphatase 3 from Arabidopsis thaliana (Mouse-ear cress).